Reading from the N-terminus, the 82-residue chain is Progonadoliberin-3 (82 aa).

A signal peptide spans Met1–Ser23. Pyrrolidone carboxylic acid is present on Gln24. A Glycine amide modification is found at Gly33.

It belongs to the GnRH family.

The protein localises to the secreted. Its function is as follows. Stimulates the secretion of gonadotropins. This chain is Progonadoliberin-3 (gnrh3), found in Oncorhynchus masou (Cherry salmon).